A 341-amino-acid polypeptide reads, in one-letter code: Phosphate acyltransferase (341 aa).

The protein belongs to the PlsX family. Homodimer. Probably interacts with PlsY.

The protein localises to the cytoplasm. The catalysed reaction is a fatty acyl-[ACP] + phosphate = an acyl phosphate + holo-[ACP]. Its pathway is lipid metabolism; phospholipid metabolism. In terms of biological role, catalyzes the reversible formation of acyl-phosphate (acyl-PO(4)) from acyl-[acyl-carrier-protein] (acyl-ACP). This enzyme utilizes acyl-ACP as fatty acyl donor, but not acyl-CoA. The sequence is that of Phosphate acyltransferase from Pseudoalteromonas atlantica (strain T6c / ATCC BAA-1087).